The primary structure comprises 124 residues: BLOC-1-related complex subunit 8 (124 aa).

The disordered stretch occupies residues S102 to P124.

The protein belongs to the BORCS8 family.

The protein resides in the lysosome membrane. As part of a BORC-like complex, it may play a role in the movement and localization of lysosomes at the cell periphery. Associated with the cytosolic face of lysosomes, this complex may couple lysosomes to microtubule plus-end-directed kinesin motors, driving lysosome movement toward the cell periphery. This Danio rerio (Zebrafish) protein is BLOC-1-related complex subunit 8.